A 484-amino-acid polypeptide reads, in one-letter code: F-box/LRR-repeat protein At3g59210 (484 aa).

The F-box domain maps to Lys-6–Leu-54. LRR repeat units follow at residues Lys-144–Ser-170, Val-172–Asn-197, Ser-205–Thr-234, Thr-303–Ser-334, and His-335–Gly-360.

The sequence is that of F-box/LRR-repeat protein At3g59210 from Arabidopsis thaliana (Mouse-ear cress).